We begin with the raw amino-acid sequence, 167 residues long: ATP synthase subunit b (167 aa).

A helical membrane pass occupies residues 9–29; the sequence is ALPLGNMLFIIIAFLLLMLIL.

Belongs to the ATPase B chain family. F-type ATPases have 2 components, F(1) - the catalytic core - and F(0) - the membrane proton channel. F(1) has five subunits: alpha(3), beta(3), gamma(1), delta(1), epsilon(1). F(0) has three main subunits: a(1), b(2) and c(10-14). The alpha and beta chains form an alternating ring which encloses part of the gamma chain. F(1) is attached to F(0) by a central stalk formed by the gamma and epsilon chains, while a peripheral stalk is formed by the delta and b chains.

The protein localises to the cell membrane. Functionally, f(1)F(0) ATP synthase produces ATP from ADP in the presence of a proton or sodium gradient. F-type ATPases consist of two structural domains, F(1) containing the extramembraneous catalytic core and F(0) containing the membrane proton channel, linked together by a central stalk and a peripheral stalk. During catalysis, ATP synthesis in the catalytic domain of F(1) is coupled via a rotary mechanism of the central stalk subunits to proton translocation. In terms of biological role, component of the F(0) channel, it forms part of the peripheral stalk, linking F(1) to F(0). The polypeptide is ATP synthase subunit b (Leuconostoc mesenteroides subsp. mesenteroides (strain ATCC 8293 / DSM 20343 / BCRC 11652 / CCM 1803 / JCM 6124 / NCDO 523 / NBRC 100496 / NCIMB 8023 / NCTC 12954 / NRRL B-1118 / 37Y)).